Here is a 211-residue protein sequence, read N- to C-terminus: Thymidylate kinase (211 aa).

7-14 is an ATP binding site; it reads GIDGCGKT.

It belongs to the thymidylate kinase family.

It catalyses the reaction dTMP + ATP = dTDP + ADP. Its function is as follows. Phosphorylation of dTMP to form dTDP in both de novo and salvage pathways of dTTP synthesis. This Anaplasma marginale (strain Florida) protein is Thymidylate kinase.